A 270-amino-acid polypeptide reads, in one-letter code: NADPH-dependent 7-cyano-7-deazaguanine reductase (270 aa).

Residue 79–81 (IES) participates in substrate binding. An NADPH-binding site is contributed by 81-82 (SK). C177 functions as the Thioimide intermediate in the catalytic mechanism. D184 functions as the Proton donor in the catalytic mechanism. A substrate-binding site is contributed by 216 to 217 (HE). 245–246 (RG) is an NADPH binding site.

Belongs to the GTP cyclohydrolase I family. QueF type 2 subfamily. In terms of assembly, homodimer.

It localises to the cytoplasm. The enzyme catalyses 7-aminomethyl-7-carbaguanine + 2 NADP(+) = 7-cyano-7-deazaguanine + 2 NADPH + 3 H(+). The protein operates within tRNA modification; tRNA-queuosine biosynthesis. Its function is as follows. Catalyzes the NADPH-dependent reduction of 7-cyano-7-deazaguanine (preQ0) to 7-aminomethyl-7-deazaguanine (preQ1). The protein is NADPH-dependent 7-cyano-7-deazaguanine reductase of Acinetobacter baumannii (strain ACICU).